A 164-amino-acid chain; its full sequence is Phosphopantetheine adenylyltransferase (164 aa).

Serine 9 is a substrate binding site. Residues 9 to 10 (SF) and histidine 17 each bind ATP. Positions 41, 73, and 87 each coordinate substrate. ATP is bound by residues 88–90 (GLR), glutamate 98, and 122–128 (YSYLSSS).

Belongs to the bacterial CoaD family. Homohexamer. Mg(2+) serves as cofactor.

The protein resides in the cytoplasm. The catalysed reaction is (R)-4'-phosphopantetheine + ATP + H(+) = 3'-dephospho-CoA + diphosphate. It functions in the pathway cofactor biosynthesis; coenzyme A biosynthesis; CoA from (R)-pantothenate: step 4/5. In terms of biological role, reversibly transfers an adenylyl group from ATP to 4'-phosphopantetheine, yielding dephospho-CoA (dPCoA) and pyrophosphate. The protein is Phosphopantetheine adenylyltransferase of Rhodococcus opacus (strain B4).